We begin with the raw amino-acid sequence, 94 residues long: Long neurotoxin LNTX37 (94 aa).

The N-terminal stretch at 1-21 (MKTLLLTLVVVTIMCLDLGYT) is a signal peptide. Cystine bridges form between cysteine 24–cysteine 43, cysteine 36–cysteine 64, cysteine 49–cysteine 53, cysteine 68–cysteine 79, and cysteine 80–cysteine 85.

Belongs to the three-finger toxin family. Long-chain subfamily. Type II alpha-neurotoxin sub-subfamily. In terms of tissue distribution, expressed by the venom gland.

It localises to the secreted. In terms of biological role, binds with high affinity to muscular (alpha-1/CHRNA1) and neuronal (alpha-7/CHRNA7) nicotinic acetylcholine receptor (nAChR) and inhibits acetylcholine from binding to the receptor, thereby impairing neuromuscular and neuronal transmission. In Ophiophagus hannah (King cobra), this protein is Long neurotoxin LNTX37.